The following is a 123-amino-acid chain: Glycine cleavage system H protein (123 aa).

The Lipoyl-binding domain occupies 23 to 104 (HWLAGITDHA…PYDAWIFSFE (82 aa)). An N6-lipoyllysine modification is found at K64.

Belongs to the GcvH family. The glycine cleavage system is composed of four proteins: P, T, L and H. Requires (R)-lipoate as cofactor.

Its function is as follows. The glycine cleavage system catalyzes the degradation of glycine. The H protein shuttles the methylamine group of glycine from the P protein to the T protein. The sequence is that of Glycine cleavage system H protein from Methylobacillus flagellatus (strain ATCC 51484 / DSM 6875 / VKM B-1610 / KT).